A 145-amino-acid polypeptide reads, in one-letter code: Peptidyl-prolyl cis-trans isomerase (145 aa).

The 145-residue stretch at 1 to 145 (MTQAILETEK…LSVKIVTDAA (145 aa)) folds into the PPIase cyclophilin-type domain.

It belongs to the cyclophilin-type PPIase family.

It carries out the reaction [protein]-peptidylproline (omega=180) = [protein]-peptidylproline (omega=0). Functionally, PPIases accelerate the folding of proteins. It catalyzes the cis-trans isomerization of proline imidic peptide bonds in oligopeptides. The protein is Peptidyl-prolyl cis-trans isomerase (rot) of Synechococcus elongatus (strain ATCC 33912 / PCC 7942 / FACHB-805) (Anacystis nidulans R2).